Here is a 101-residue protein sequence, read N- to C-terminus: MNVAEFHQKVEQVWQQIEEKIDDEALSIDTEIHGAVCTLTFDDESQIIINKQEAMLELWLASKLGGFHFAFRDGEWVTAEGRSFWTHLEEAFARHGEQISF.

Belongs to the frataxin family.

Involved in iron-sulfur (Fe-S) cluster assembly. May act as a regulator of Fe-S biogenesis. This is Iron-sulfur cluster assembly protein CyaY from Actinobacillus pleuropneumoniae serotype 5b (strain L20).